Consider the following 283-residue polypeptide: Ribosome biogenesis GTPase A (283 aa).

The region spanning 14 to 178 is the CP-type G domain; it reads RREVTEKLKL…LLDTPGILWP (165 aa). GTP contacts are provided by residues 58-61, 86-87, 130-135, and G174; these read NKAD, NS, and NVGKST.

The protein belongs to the TRAFAC class YlqF/YawG GTPase family. MTG1 subfamily. Interacts with ctc. Interacts with the immature 50S ribosome subunit. 2 molecules of rbgA bind to one 50S subunit.

The protein resides in the cytoplasm. Its function is as follows. Essential protein that is required for a late step of 50S ribosomal subunit assembly. Has GTPase activity that is stimulated by interaction with the immature 50S ribosome subunit. Binds to the 23S rRNA. Required for the association of ribosomal proteins rplP and rpmA with the large subunit. In Bacillus licheniformis (strain ATCC 14580 / DSM 13 / JCM 2505 / CCUG 7422 / NBRC 12200 / NCIMB 9375 / NCTC 10341 / NRRL NRS-1264 / Gibson 46), this protein is Ribosome biogenesis GTPase A.